The sequence spans 430 residues: Enolase (430 aa).

Glutamine 167 lines the (2R)-2-phosphoglycerate pocket. Residue glutamate 209 is the Proton donor of the active site. Residues aspartate 246, glutamate 287, and aspartate 314 each coordinate Mg(2+). Lysine 339, arginine 368, serine 369, and lysine 390 together coordinate (2R)-2-phosphoglycerate. Lysine 339 serves as the catalytic Proton acceptor.

Belongs to the enolase family. Mg(2+) is required as a cofactor.

Its subcellular location is the cytoplasm. It is found in the secreted. The protein localises to the cell surface. The enzyme catalyses (2R)-2-phosphoglycerate = phosphoenolpyruvate + H2O. It participates in carbohydrate degradation; glycolysis; pyruvate from D-glyceraldehyde 3-phosphate: step 4/5. Catalyzes the reversible conversion of 2-phosphoglycerate (2-PG) into phosphoenolpyruvate (PEP). It is essential for the degradation of carbohydrates via glycolysis. The chain is Enolase from Prochlorococcus marinus (strain MIT 9312).